We begin with the raw amino-acid sequence, 1885 residues long: Chitin synthase 5 (1885 aa).

The 789-residue stretch at 1–789 (MATRGNVPAH…SIALTGSQAA (789 aa)) folds into the Myosin motor domain. 99–106 (GESGSGKT) serves as a coordination point for ATP. N-linked (GlcNAc...) asparagine glycosylation is found at Asn-219 and Asn-429. The segment at 601 to 649 (KPLRMPSVSRKKHDQLRRMASRRADRSPAPQEEEPLPGTEEAKVRRTKP) is disordered. A compositionally biased stretch (basic residues) spans 609 to 621 (SRKKHDQLRRMAS). Residues 666-690 (LDNITKSLTAPNVNNYFVFCLKPND) form an actin-binding region. N-linked (GlcNAc...) asparagine glycosylation is present at Asn-668. The interval 794–817 (GDIGSPSRPDTPGHNPFSDSKARL) is disordered. The next 2 helical transmembrane spans lie at 894-914 (WLAI…KWIG) and 929-949 (FAIN…IIVF). One can recognise a Cytochrome b5 heme-binding domain in the interval 957–1016 (QNVYSAAELSAHDGKGKHSAYVAIRGQVFDLGAFMPNHYPKIIPQSSLKKYAGVDATGLF). 2 N-linked (GlcNAc...) asparagine glycosylation sites follow: Asn-1043 and Asn-1068. Residues 1205–1225 (ILLAVSILLCSVIGFKFFAAL) form a helical membrane-spanning segment. 2 N-linked (GlcNAc...) asparagine glycosylation sites follow: Asn-1462 and Asn-1568. Transmembrane regions (helical) follow at residues 1599–1619 (LLST…IVLL), 1626–1646 (VPLT…IIFI), and 1653–1673 (MIGW…GLPL). N-linked (GlcNAc...) asparagine glycans are attached at residues Asn-1759 and Asn-1790. Residues 1827 to 1882 (LPTDDMLLNEIRDILRTADLMTVTKKGIKQELERRFNVNLDMKRAYIGSATEAILS) form the DEK-C domain.

The protein in the N-terminal section; belongs to the TRAFAC class myosin-kinesin ATPase superfamily. Myosin family. In the C-terminal section; belongs to the chitin synthase family. Class V subfamily. In terms of processing, maximal activity requires trypsin activation, suggesting a zymogenic nature.

The protein resides in the cell membrane. Its subcellular location is the membrane. The enzyme catalyses [(1-&gt;4)-N-acetyl-beta-D-glucosaminyl](n) + UDP-N-acetyl-alpha-D-glucosamine = [(1-&gt;4)-N-acetyl-beta-D-glucosaminyl](n+1) + UDP + H(+). Its function is as follows. Polymerizes chitin, a structural polymer of the cell wall and septum, by transferring the sugar moiety of UDP-GlcNAc to the non-reducing end of the growing chitin polymer. CHS5 is required for the sustained growth at 37 degrees Celsius and is of critical importance for virulence. Especially important at infection temperatures for maintaining the cell wall integrity of developing yeast buds, elongating tips of hyphae, and random sites of expansion in sclerotic forms. In Exophiala dermatitidis (strain ATCC 34100 / CBS 525.76 / NIH/UT8656) (Black yeast), this protein is Chitin synthase 5.